A 145-amino-acid polypeptide reads, in one-letter code: Ribonuclease H (145 aa).

In terms of domain architecture, RNase H type-1 spans 1–141 (MQEVTIYSDG…ADALANRGVA (141 aa)). Residues Asp-9, Glu-47, Asp-69, and Asp-133 each contribute to the Mg(2+) site.

The protein belongs to the RNase H family. As to quaternary structure, monomer. Mg(2+) serves as cofactor.

It localises to the cytoplasm. It carries out the reaction Endonucleolytic cleavage to 5'-phosphomonoester.. In terms of biological role, endonuclease that specifically degrades the RNA of RNA-DNA hybrids. This Cupriavidus metallidurans (strain ATCC 43123 / DSM 2839 / NBRC 102507 / CH34) (Ralstonia metallidurans) protein is Ribonuclease H.